Consider the following 707-residue polypeptide: tRNA 5-methylaminomethyl-2-thiouridine biosynthesis bifunctional protein MnmC (707 aa).

The segment at 1–264 is tRNA (mnm(5)s(2)U34)-methyltransferase; that stretch reads MTKKLEHEYI…KREMLFGTFE (264 aa). Residues 312–707 are FAD-dependent cmnm(5)s(2)U34 oxidoreductase; that stretch reads IGGGLAGAHA…LFRDLTRNRI (396 aa).

The protein in the N-terminal section; belongs to the methyltransferase superfamily. tRNA (mnm(5)s(2)U34)-methyltransferase family. This sequence in the C-terminal section; belongs to the DAO family. FAD is required as a cofactor.

The protein localises to the cytoplasm. It carries out the reaction 5-aminomethyl-2-thiouridine(34) in tRNA + S-adenosyl-L-methionine = 5-methylaminomethyl-2-thiouridine(34) in tRNA + S-adenosyl-L-homocysteine + H(+). Its function is as follows. Catalyzes the last two steps in the biosynthesis of 5-methylaminomethyl-2-thiouridine (mnm(5)s(2)U) at the wobble position (U34) in tRNA. Catalyzes the FAD-dependent demodification of cmnm(5)s(2)U34 to nm(5)s(2)U34, followed by the transfer of a methyl group from S-adenosyl-L-methionine to nm(5)s(2)U34, to form mnm(5)s(2)U34. This chain is tRNA 5-methylaminomethyl-2-thiouridine biosynthesis bifunctional protein MnmC, found in Saccharophagus degradans (strain 2-40 / ATCC 43961 / DSM 17024).